A 330-amino-acid chain; its full sequence is MKVVFAGTPGFARVALQRLLDAGFSLPLVLTRPDQPAGRGLQWQASPVKQCALAHGLAVAQPRSLRLDGRYPQDAAAARAALLAAQAEVMVVAAYGLILPQWVLDLPARGCLNIHASLLPRWRGAAPIQRAIEAGDTHTGVTIMQMDAGLDTGAMLLSQGSAIAPTDTTATLHDRLAALGADLIVQALEKMAAGADLPALAQPAQGVAYARKIEKSESSIDWSLPAQRIGQRIRAFDPAPGASTTCNGTSIKLWGYAIDGATIDGQRGVPRMHPGQILSADDSGIAVACGQGTALRLTVLQRAGGKRLAAADFLRGFALQPGMWLGAARA.

117-120 (SLLP) contributes to the (6S)-5,6,7,8-tetrahydrofolate binding site.

This sequence belongs to the Fmt family.

The enzyme catalyses L-methionyl-tRNA(fMet) + (6R)-10-formyltetrahydrofolate = N-formyl-L-methionyl-tRNA(fMet) + (6S)-5,6,7,8-tetrahydrofolate + H(+). Its function is as follows. Attaches a formyl group to the free amino group of methionyl-tRNA(fMet). The formyl group appears to play a dual role in the initiator identity of N-formylmethionyl-tRNA by promoting its recognition by IF2 and preventing the misappropriation of this tRNA by the elongation apparatus. The protein is Methionyl-tRNA formyltransferase of Verminephrobacter eiseniae (strain EF01-2).